Here is a 440-residue protein sequence, read N- to C-terminus: 23S rRNA (uracil(1939)-C(5))-methyltransferase RlmD (440 aa).

Residues 11–69 form the TRAM domain; sequence STLDTKHQPVTIERLDHQGSGLAFLHKKPLFVDGALPGEEVLIQLTENKSKYARGQLIK. Cys-82, Cys-88, Cys-91, and Cys-169 together coordinate [4Fe-4S] cluster. S-adenosyl-L-methionine is bound by residues Gln-272, Phe-301, Asn-306, Glu-322, Asn-349, and Asp-370. The active-site Nucleophile is the Cys-396.

This sequence belongs to the class I-like SAM-binding methyltransferase superfamily. RNA M5U methyltransferase family. RlmD subfamily.

It carries out the reaction uridine(1939) in 23S rRNA + S-adenosyl-L-methionine = 5-methyluridine(1939) in 23S rRNA + S-adenosyl-L-homocysteine + H(+). Functionally, catalyzes the formation of 5-methyl-uridine at position 1939 (m5U1939) in 23S rRNA. The chain is 23S rRNA (uracil(1939)-C(5))-methyltransferase RlmD from Vibrio cholerae serotype O1 (strain M66-2).